The chain runs to 89 residues: Small ribosomal subunit protein uS15 (89 aa).

This sequence belongs to the universal ribosomal protein uS15 family. As to quaternary structure, part of the 30S ribosomal subunit. Forms a bridge to the 50S subunit in the 70S ribosome, contacting the 23S rRNA.

Its function is as follows. One of the primary rRNA binding proteins, it binds directly to 16S rRNA where it helps nucleate assembly of the platform of the 30S subunit by binding and bridging several RNA helices of the 16S rRNA. In terms of biological role, forms an intersubunit bridge (bridge B4) with the 23S rRNA of the 50S subunit in the ribosome. The protein is Small ribosomal subunit protein uS15 of Brucella abortus (strain S19).